The chain runs to 80 residues: UPF0125 protein PD_1376 (80 aa).

The protein belongs to the UPF0125 (RnfH) family.

This is UPF0125 protein PD_1376 from Xylella fastidiosa (strain Temecula1 / ATCC 700964).